The sequence spans 99 residues: Plastocyanin (99 aa).

One can recognise a Plastocyanin-like domain in the interval 1-99; sequence AEVLLGSSDG…AGMVGKVTVN (99 aa). Cu cation is bound by residues histidine 37, cysteine 84, histidine 87, and methionine 92.

This sequence belongs to the plastocyanin family. Cu(2+) serves as cofactor.

The protein localises to the plastid. The protein resides in the chloroplast thylakoid membrane. Functionally, participates in electron transfer between P700 and the cytochrome b6-f complex in photosystem I. This is Plastocyanin (PETE) from Lactuca sativa (Garden lettuce).